A 431-amino-acid polypeptide reads, in one-letter code: Glucose-1-phosphate adenylyltransferase (431 aa).

Beta-D-fructose 1,6-bisphosphate is bound at residue lysine 39. Residues arginine 40, histidine 46, and arginine 52 each contribute to the AMP site. Tyrosine 114 contacts alpha-D-glucose 1-phosphate. Residue arginine 130 participates in AMP binding. Residues glycine 179, 194–195, and serine 212 contribute to the alpha-D-glucose 1-phosphate site; that span reads EK. Positions 370 and 386 each coordinate AMP. Beta-D-fructose 1,6-bisphosphate-binding positions include 419-423 and 429-431; these read REMLR and QER.

This sequence belongs to the bacterial/plant glucose-1-phosphate adenylyltransferase family. Homotetramer.

The catalysed reaction is alpha-D-glucose 1-phosphate + ATP + H(+) = ADP-alpha-D-glucose + diphosphate. It functions in the pathway glycan biosynthesis; glycogen biosynthesis. Its activity is regulated as follows. Allosterically activated by fructose-1,6-bisphosphate (F16BP) and inhibited by AMP. Involved in the biosynthesis of ADP-glucose, a building block required for the elongation reactions to produce glycogen. Catalyzes the reaction between ATP and alpha-D-glucose 1-phosphate (G1P) to produce pyrophosphate and ADP-Glc. This Salmonella paratyphi A (strain ATCC 9150 / SARB42) protein is Glucose-1-phosphate adenylyltransferase.